Here is an 822-residue protein sequence, read N- to C-terminus: Calpain-3 (822 aa).

Positions 1 to 36 (MPTVISASVAPRTGAEPMSPGPIAQAAQDKGTEAGG) are disordered. Residues 74 to 418 (LFVDPEFPPD…FTKLEICNLT (345 aa)) enclose the Calpain catalytic domain. Active-site residues include Cys129, His335, and Asn359. Positions 419–587 (ADALESDKLQ…KRNLSEEVEN (169 aa)) are domain III. A linker region spans residues 588 to 650 (TISVDRPVKK…EPGNTDQESE (63 aa)). Residues 604 to 652 (IFVSDRANSNKELGVDQETEEGKDNTSPDKQAKSPQLEPGNTDQESEEQ) form a disordered region. A compositionally biased stretch (basic and acidic residues) spans 623 to 635 (EEGKDNTSPDKQA). EF-hand domains are found at residues 650 to 684 (EEQR…VVNK), 693 to 726 (FTLE…KKIK), 723 to 758 (KKIK…AGFH), and 788 to 822 (VRLE…TMYA). The domain IV stretch occupies residues 651-822 (EQRQFRNIFR…LEWLQLTMYA (172 aa)). Residues Ala663, Asp666, Glu668, Glu673, Asp706, Asp708, Ser710, Arg712, Glu717, Asp736, Asp738, Ser740, Thr742, Glu747, Asp801, Asp803, Asp805, and Ile807 each contribute to the Ca(2+) site.

Belongs to the peptidase C2 family. Homodimer; via EF-hand domain 4. Interacts with TTN/titin. Interacts with CMYA5; this interaction, which results in CMYA5 proteolysis, may protect CAPN3 from autolysis. Interacts with SIMC1. Interacts with UTP25; the interaction is required for CAPN3 translocation to the nucleolus. As to expression, skeletal muscle.

Its subcellular location is the cytoplasm. The protein localises to the nucleus. It is found in the nucleolus. It catalyses the reaction Broad endopeptidase activity.. With respect to regulation, activated by micromolar concentrations of calcium and inhibited by calpastatin. Its function is as follows. Calcium-regulated non-lysosomal thiol-protease. Proteolytically cleaves CTBP1. Mediates, with UTP25, the proteasome-independent degradation of p53/TP53. This chain is Calpain-3 (CAPN3), found in Bos taurus (Bovine).